The primary structure comprises 186 residues: Centromere protein M (186 aa).

It is found in the nucleus. It localises to the chromosome. Its subcellular location is the centromere. Its function is as follows. Probable component of a centromeric complex involved in assembly of kinetochore proteins, mitotic progression and chromosome segregation. In Danio rerio (Zebrafish), this protein is Centromere protein M (cenpm).